The primary structure comprises 91 residues: C-C motif chemokine 5 (91 aa).

The N-terminal stretch at 1-23 (MKVSATAFAVLLMAAALCAPASA) is a signal peptide. 2 disulfides stabilise this stretch: Cys-33–Cys-57 and Cys-34–Cys-73.

It belongs to the intercrine beta (chemokine CC) family.

It localises to the secreted. Its function is as follows. Chemoattractant for blood monocytes, memory T-helper cells and eosinophils. Causes the release of histamine from basophils and activates eosinophils. May activate several chemokine receptors including CCR1, CCR3, CCR4 and CCR5. May also be an agonist of the G protein-coupled receptor GPR75. Together with GPR75, may play a role in neuron survival through activation of a downstream signaling pathway involving the PI3, Akt and MAP kinases. By activating GPR75 may also play a role in insulin secretion by islet cells. This Bos taurus (Bovine) protein is C-C motif chemokine 5 (CCL5).